The primary structure comprises 704 residues: Transmembrane protein DDB_G0274347 (704 aa).

The interval 37–145 (VEQRDEVNDE…NNYNNNNTPT (109 aa)) is disordered. A compositionally biased stretch (acidic residues) spans 43 to 67 (VNDEFQEEEEELEDDDDDEDDEDEI). Positions 85–99 (HNDKEKEKKKDKQEE) are enriched in basic and acidic residues. Residues 100-113 (YIDSDDDDDDDGDE) are compositionally biased toward acidic residues. Residues 114 to 142 (NYYLNNNNNNNNNINNNNNYNNNNYNNNN) show a composition bias toward low complexity. N-linked (GlcNAc...) asparagine glycosylation occurs at Asn166. The chain crosses the membrane as a helical span at residues 255-275 (ALISMALLISLVAIIFYLPLP). Asn354 carries N-linked (GlcNAc...) asparagine glycosylation. The next 3 helical transmembrane spans lie at 370-390 (LKIF…WLFA), 414-434 (TLLV…LYFI), and 513-533 (LVSF…FLIS). Residues 550–565 (TTTTTINTTTNTTSNT) show a composition bias toward low complexity. The disordered stretch occupies residues 550–576 (TTTTTINTTTNTTSNTSQQSNPLSKRL). Asn556, Asn560, and Asn564 each carry an N-linked (GlcNAc...) asparagine glycan. The segment covering 566–576 (SQQSNPLSKRL) has biased composition (polar residues). The next 2 helical transmembrane spans lie at 609-629 (FIIV…GVPP) and 638-658 (IFFI…LIII).

The protein localises to the membrane. The protein is Transmembrane protein DDB_G0274347 of Dictyostelium discoideum (Social amoeba).